The primary structure comprises 252 residues: Reaction center protein L chain (252 aa).

Transmembrane regions (helical) follow at residues 8 to 30 (FFGV…GAAL), 58 to 86 (GGLW…SRKL), and 91 to 113 (HVPA…RPLL). (7R,8Z)-bacteriochlorophyll b contacts are provided by His-128 and His-148. A helical membrane pass occupies residues 146-173 (PMHMVAVTLFFTTTLALALHGSLVLAAI). A Fe cation-binding site is contributed by His-165. Phe-191 provides a ligand contact to a ubiquinone. A helical transmembrane segment spans residues 200–225 (GTLGIHRLGLFLALGAGFASATCILL). Position 205 (His-205) interacts with Fe cation.

It belongs to the reaction center PufL/M/PsbA/D family. Reaction center is composed of four bacteriochlorophylls, two bacteriopheophytins, two ubiquinones, one iron, and two highly hydrophobic polypeptide chains (designated L and M).

It is found in the cell inner membrane. Its function is as follows. The reaction center is a membrane-bound complex that mediates the initial photochemical event in the electron transfer process of photosynthesis. This Acidiphilium cryptum protein is Reaction center protein L chain (pufL).